Here is a 913-residue protein sequence, read N- to C-terminus: Eukaryotic translation initiation factor 3 subunit C (913 aa).

A disordered region spans residues 1–44 (MSRFFTTGSDSESESSLSGEELVTKPVGGNYGKQPLLLSEDEED). Positions 8-21 (GSDSESESSLSGEE) are enriched in low complexity. Phosphoserine occurs at positions 9, 11, 13, 15, 16, 18, and 39. Lys-99 carries the post-translational modification N6-acetyllysine. Disordered stretches follow at residues 157–301 (TSYK…GGEW) and 522–542 (QLTP…NEGE). 4 positions are modified to phosphoserine: Ser-166, Ser-178, Ser-181, and Ser-182. Over residues 166–190 (SADEDAEKNEEDSEGSSDEDEDEDG) the composition is skewed to acidic residues. Residues 199-216 (KKSEAPSGESRKFLKKMD) are compositionally biased toward basic and acidic residues. Over residues 217–232 (DEDEDSEDSEDDEDWD) the composition is skewed to acidic residues. Residues 261–278 (PTTDEDKKAAEKKREDKA) show a composition bias toward basic and acidic residues. The segment covering 522-531 (QLTPPEGSSK) has biased composition (polar residues). Thr-524 is subject to Phosphothreonine. An N6-acetyllysine modification is found at Lys-643. One can recognise a PCI domain in the interval 673 to 849 (FHLHINLELL…QTVVMHRTEP (177 aa)). A disordered region spans residues 885–913 (FRDQKDGYRKNEGYMRRGGYRQQQSQTAY). Positions 886–899 (RDQKDGYRKNEGYM) are enriched in basic and acidic residues. Position 909 is a phosphoserine (Ser-909).

The protein belongs to the eIF-3 subunit C family. As to quaternary structure, component of the eukaryotic translation initiation factor 3 (eIF-3) complex, which is composed of 13 subunits: EIF3A, EIF3B, EIF3C, EIF3D, EIF3E, EIF3F, EIF3G, EIF3H, EIF3I, EIF3J, EIF3K, EIF3L and EIF3M. The eIF-3 complex appears to include 3 stable modules: module A is composed of EIF3A, EIF3B, EIF3G and EIF3I; module B is composed of EIF3F, EIF3H, and EIF3M; and module C is composed of EIF3C, EIF3D, EIF3E, EIF3K and EIF3L. EIF3C of module C binds EIF3B of module A and EIF3H of module B, thereby linking the three modules. EIF3J is a labile subunit that binds to the eIF-3 complex via EIF3B. The eIF-3 complex interacts with RPS6KB1 under conditions of nutrient depletion. Mitogenic stimulation leads to binding and activation of a complex composed of MTOR and RPTOR, leading to phosphorylation and release of RPS6KB1 and binding of EIF4B to eIF-3. Interacts with ALKBH4, IFIT1 and IFIT2. Interacts with BZW2/5MP1. Phosphorylated. Phosphorylation is enhanced upon serum stimulation.

The protein localises to the cytoplasm. Its function is as follows. Component of the eukaryotic translation initiation factor 3 (eIF-3) complex, which is required for several steps in the initiation of protein synthesis. The eIF-3 complex associates with the 40S ribosome and facilitates the recruitment of eIF-1, eIF-1A, eIF-2:GTP:methionyl-tRNAi and eIF-5 to form the 43S pre-initiation complex (43S PIC). The eIF-3 complex stimulates mRNA recruitment to the 43S PIC and scanning of the mRNA for AUG recognition. The eIF-3 complex is also required for disassembly and recycling of post-termination ribosomal complexes and subsequently prevents premature joining of the 40S and 60S ribosomal subunits prior to initiation. The eIF-3 complex specifically targets and initiates translation of a subset of mRNAs involved in cell proliferation, including cell cycling, differentiation and apoptosis, and uses different modes of RNA stem-loop binding to exert either translational activation or repression. The chain is Eukaryotic translation initiation factor 3 subunit C from Pongo abelii (Sumatran orangutan).